A 70-amino-acid polypeptide reads, in one-letter code: METQKEIVFIAVESEDGGYIEKTERYSIFTQGDTWEELLEMIKDAVKCHFDEGAPKYVHARFVKDVTIAV.

Belongs to the UPF0150 family.

The chain is UPF0150 protein TM_1311 from Thermotoga maritima (strain ATCC 43589 / DSM 3109 / JCM 10099 / NBRC 100826 / MSB8).